The primary structure comprises 261 residues: Methyl jasmonate esterase 1 (261 aa).

Residues 8–251 form the AB hydrolase-1 domain; the sequence is FVLVHGACHG…MFSKPLDLCA (244 aa). The Acyl-ester intermediate role is filled by serine 82. Active-site charge relay system residues include aspartate 211 and histidine 239.

The protein belongs to the AB hydrolase superfamily. Methylesterase family. As to quaternary structure, homodimer.

The enzyme catalyses methyl (-)-jasmonate + H2O = jasmonate + methanol + H(+). It catalyses the reaction methyl salicylate + H2O = salicylate + methanol + H(+). It functions in the pathway plant hormone biosynthesis. It participates in lipid metabolism; oxylipin biosynthesis. Methylesterase that catalyzes the hydrolysis of methyl jasmonate (MeJA) into jasmonate (JA). Can also use methyl salicylate (MeSA) as substrate with a lower efficiency. This Vitis vinifera (Grape) protein is Methyl jasmonate esterase 1.